We begin with the raw amino-acid sequence, 163 residues long: uncharacterized protein (163 aa).

This is an uncharacterized protein from Haemophilus phage HP1 (strain HP1c1) (Bacteriophage HP1).